We begin with the raw amino-acid sequence, 405 residues long: Pleckstrin homology-like domain family A member 1 (405 aa).

Basic and acidic residues-rich tracts occupy residues 1–11 (MRRTPAAERLS) and 54–63 (RSPEDGREQP). Disordered stretches follow at residues 1 to 67 (MRRT…AHGS), 189 to 217 (QLQQQQQQQQPGQGTAEPSQPSGPTVASL), and 293 to 405 (QQHL…SNSA). Residues 153–277 (ALKEGVLEKR…AEITLQMVQY (125 aa)) form the PH domain. Low complexity predominate over residues 189 to 202 (QLQQQQQQQQPGQG). A compositionally biased stretch (polar residues) spans 204–213 (AEPSQPSGPT). The segment covering 294-309 (QHLVQQQPPQTQQIQP) has biased composition (low complexity). The 16 X 2 AA repeats of P-Q stretch occupies residues 309 to 344 (PQPQPQIQPQPQPQIQPQPQPQPQPQPQPQPQPQPQ). Pro residues predominate over residues 310 to 342 (QPQPQIQPQPQPQIQPQPQPQPQPQPQPQPQPQ). Residues 350–376 (PHPHPHPYSHPHQHPHPHPHPHPHPHP) are compositionally biased toward basic residues. The interval 354 to 377 (PHPYSHPHQHPHPHPHPHPHPHPH) is 11 X 2 AA repeats of P-H. The segment covering 378–389 (PYQLQHAHQPLH) has biased composition (low complexity).

Interacts with RPL14, EIF3S7 and PABPC4. As to expression, widely expressed with very high levels in adult liver and high levels in adult lung. According to PubMed:10428057 expressed at low levels in liver. Expressed at increased levels in atherosclerotic lesions observed in hyperhomocysteinema.

It localises to the cytoplasm. The protein localises to the cytoplasmic vesicle. Its subcellular location is the nucleus. It is found in the nucleolus. Its function is as follows. Seems to be involved in regulation of apoptosis. May be involved in detachment-mediated programmed cell death. May mediate apoptosis during neuronal development. May be involved in regulation of anti-apoptotic effects of IGF1. Required for TCR-induced apoptosis and expression of TNFRSF6/FAS in a T-cell hybridoma cell line. May be involved in translational regulation. The protein is Pleckstrin homology-like domain family A member 1 (Phlda1) of Mus musculus (Mouse).